The following is a 285-amino-acid chain: SLAM family member 8 (285 aa).

An N-terminal signal peptide occupies residues 1 to 22 (MVMRPLWSLLLWEALLPITVTG). Residues 23 to 233 (AQVLSKVGGS…AAPGKASYKD (211 aa)) lie on the Extracellular side of the membrane. Asn85 is a glycosylation site (N-linked (GlcNAc...) asparagine). Residues 128–215 (PVVQVFIAVE…PVSWDLATVT (88 aa)) form the Ig-like C2-type domain. Cysteines 152 and 201 form a disulfide. The chain crosses the membrane as a helical span at residues 234-254 (VLLVVVPVSLLLMLVTLFSAW). At 255-285 (HWCPCSGKKKKDVHADRVGPETENPLVQDLP) the chain is on the cytoplasmic side. Positions 262–285 (KKKKDVHADRVGPETENPLVQDLP) are disordered.

In terms of tissue distribution, expressed in lymph node, spleen, thymus and bone marrow.

The protein localises to the membrane. Its function is as follows. May play a role in B-lineage commitment and/or modulation of signaling through the B-cell receptor. This Homo sapiens (Human) protein is SLAM family member 8 (SLAMF8).